The chain runs to 461 residues: Cysteine--tRNA ligase (461 aa).

Cys-28 lines the Zn(2+) pocket. The short motif at Ile-30–His-40 is the 'HIGH' region element. Cys-209, His-234, and Glu-238 together coordinate Zn(2+). Residues Lys-266 to Ser-270 carry the 'KMSKS' region motif. Lys-269 contacts ATP.

The protein belongs to the class-I aminoacyl-tRNA synthetase family. Monomer. Zn(2+) is required as a cofactor.

It is found in the cytoplasm. The catalysed reaction is tRNA(Cys) + L-cysteine + ATP = L-cysteinyl-tRNA(Cys) + AMP + diphosphate. This Shigella sonnei (strain Ss046) protein is Cysteine--tRNA ligase.